We begin with the raw amino-acid sequence, 102 residues long: MNAIPLEHGLALASVLFALGLVGLMVRRNILFVLMSLEVMMNAAALAFVVAGSRWGQPDGQVMFILVLSLAAAEASIGLAILLQLYRRFHTLDIDAASEMRG.

Transmembrane regions (helical) follow at residues 6-26 (LEHG…GLMV), 30-50 (ILFV…AFVV), and 62-82 (VMFI…LAIL).

This sequence belongs to the complex I subunit 4L family. NDH-1 is composed of 13 different subunits. Subunits NuoA, H, J, K, L, M, N constitute the membrane sector of the complex.

It is found in the cell inner membrane. The catalysed reaction is a quinone + NADH + 5 H(+)(in) = a quinol + NAD(+) + 4 H(+)(out). Its function is as follows. NDH-1 shuttles electrons from NADH, via FMN and iron-sulfur (Fe-S) centers, to quinones in the respiratory chain. The immediate electron acceptor for the enzyme in this species is believed to be ubiquinone. Couples the redox reaction to proton translocation (for every two electrons transferred, four hydrogen ions are translocated across the cytoplasmic membrane), and thus conserves the redox energy in a proton gradient. This is NADH-quinone oxidoreductase subunit K from Pseudomonas aeruginosa (strain LESB58).